The sequence spans 693 residues: FAST kinase domain-containing protein 2, mitochondrial (693 aa).

S110 and S124 each carry phosphoserine. The 58-residue stretch at 618 to 675 folds into the RAP domain; it reads VAVLCVSRSAYCLGSSHPRGFLAMKMRHLNAMGFRVILVNNWEMDKLEMEDAVTFLKT. S692 is modified (phosphoserine).

The protein belongs to the FAST kinase family. Monomer. Found in a complex with GRSF1, DDX28, DHX30 and FASTKD5. Associates with the 16S mitochondrial rRNA (16S mt-rRNA). Forms a regulatory protein-RNA complex, consisting of RCC1L, NGRN, RPUSD3, RPUSD4, TRUB2, FASTKD2 and 16S mt-rRNA.

It is found in the mitochondrion matrix. Its subcellular location is the mitochondrion nucleoid. Functionally, plays an important role in assembly of the mitochondrial large ribosomal subunit. As a component of a functional protein-RNA module, consisting of RCC1L, NGRN, RPUSD3, RPUSD4, TRUB2, FASTKD2 and 16S mitochondrial ribosomal RNA (16S mt-rRNA), controls 16S mt-rRNA abundance and is required for intra-mitochondrial translation. May play a role in mitochondrial apoptosis. In Pongo abelii (Sumatran orangutan), this protein is FAST kinase domain-containing protein 2, mitochondrial (FASTKD2).